A 208-amino-acid polypeptide reads, in one-letter code: Probable nicotinate-nucleotide adenylyltransferase (208 aa).

Belongs to the NadD family.

It carries out the reaction nicotinate beta-D-ribonucleotide + ATP + H(+) = deamido-NAD(+) + diphosphate. Its pathway is cofactor biosynthesis; NAD(+) biosynthesis; deamido-NAD(+) from nicotinate D-ribonucleotide: step 1/1. Its function is as follows. Catalyzes the reversible adenylation of nicotinate mononucleotide (NaMN) to nicotinic acid adenine dinucleotide (NaAD). This is Probable nicotinate-nucleotide adenylyltransferase from Symbiobacterium thermophilum (strain DSM 24528 / JCM 14929 / IAM 14863 / T).